A 782-amino-acid chain; its full sequence is Endonuclease MutS2 (782 aa).

336 to 343 is an ATP binding site; it reads GPNTGGKT. In terms of domain architecture, Smr spans 707-782; it reads LDLRGYRYED…GFGVTVATLK (76 aa).

This sequence belongs to the DNA mismatch repair MutS family. MutS2 subfamily. In terms of assembly, homodimer. Binds to stalled ribosomes, contacting rRNA.

Its function is as follows. Endonuclease that is involved in the suppression of homologous recombination and thus may have a key role in the control of bacterial genetic diversity. Functionally, acts as a ribosome collision sensor, splitting the ribosome into its 2 subunits. Detects stalled/collided 70S ribosomes which it binds and splits by an ATP-hydrolysis driven conformational change. Acts upstream of the ribosome quality control system (RQC), a ribosome-associated complex that mediates the extraction of incompletely synthesized nascent chains from stalled ribosomes and their subsequent degradation. Probably generates substrates for RQC. The polypeptide is Endonuclease MutS2 (Staphylococcus aureus (strain Mu50 / ATCC 700699)).